The chain runs to 85 residues: Follicular dendritic cell secreted peptide (85 aa).

A signal peptide spans 1–17; the sequence is MKKVLLLITAILAVAVG. Residues 75–83 form an O-glycosylated at one site region; the sequence is SAPTTPLPS.

In terms of processing, O-glycosylated with core 1 or possibly core 8 glycans. As to expression, abundantly expressed in tonsil, lymph node, and trachea; strong expression in prostate; lower expression in thyroid, stomach, and colon.

The protein localises to the secreted. Functionally, can bind to the surface of B-lymphoma cells, but not T-lymphoma cells, consistent with a function as a secreted mediator acting upon B-cells. The protein is Follicular dendritic cell secreted peptide (FDCSP) of Homo sapiens (Human).